The following is a 353-amino-acid chain: Protein pelota homolog (353 aa).

It belongs to the eukaryotic release factor 1 family. Pelota subfamily. As to quaternary structure, monomer. The cofactor is a divalent metal cation.

It is found in the cytoplasm. May function in recognizing stalled ribosomes, interact with stem-loop structures in stalled mRNA molecules, and effect endonucleolytic cleavage of the mRNA. May play a role in the release non-functional ribosomes and degradation of damaged mRNAs. Has endoribonuclease activity. This Methanopyrus kandleri (strain AV19 / DSM 6324 / JCM 9639 / NBRC 100938) protein is Protein pelota homolog.